Here is a 256-residue protein sequence, read N- to C-terminus: 4-hydroxy-tetrahydrodipicolinate reductase (256 aa).

Position 8-13 (8-13 (GASGKM)) interacts with NAD(+). K36 is an NADP(+) binding site. NAD(+) contacts are provided by residues 87 to 89 (GTT) and 111 to 114 (ATNM). H143 serves as the catalytic Proton donor/acceptor. Residue H144 participates in (S)-2,3,4,5-tetrahydrodipicolinate binding. K147 functions as the Proton donor in the catalytic mechanism. (S)-2,3,4,5-tetrahydrodipicolinate is bound at residue 153–154 (GT).

Belongs to the DapB family.

Its subcellular location is the cytoplasm. It catalyses the reaction (S)-2,3,4,5-tetrahydrodipicolinate + NAD(+) + H2O = (2S,4S)-4-hydroxy-2,3,4,5-tetrahydrodipicolinate + NADH + H(+). It carries out the reaction (S)-2,3,4,5-tetrahydrodipicolinate + NADP(+) + H2O = (2S,4S)-4-hydroxy-2,3,4,5-tetrahydrodipicolinate + NADPH + H(+). The protein operates within amino-acid biosynthesis; L-lysine biosynthesis via DAP pathway; (S)-tetrahydrodipicolinate from L-aspartate: step 4/4. Functionally, catalyzes the conversion of 4-hydroxy-tetrahydrodipicolinate (HTPA) to tetrahydrodipicolinate. The protein is 4-hydroxy-tetrahydrodipicolinate reductase of Campylobacter concisus (strain 13826).